We begin with the raw amino-acid sequence, 334 residues long: MSVAERLQRAWYQGHPALCLLAPLELLYRRVVEARRRRFLEDPNTSYRAPVPVVVVGNITVGGTGKTPLILWLIEHCQRRGLRVGVVSRGYAAEPPTLPWRVRAEHPAQHCGDEPLLIVQRTGVPLMIDPDRARAVRALLQQEPLDLILSDDGLQHYRLARDLELVLIDAARGLGNGRCLPAGPLREPPERLGEVDAVLFNGAAADTVEGYAFSLQPVGLVELSTGRRWPLDHYPAGQQLHAVAGIGNPQRFFDTLETLHWRPIPHAFADHADYSPEQLKFSPELPLVMTEKDAVKCRAFAPPGWSYLQVQAVPSTAFVTWFDDQLARLLPDLS.

Residue 60–67 (TVGGTGKT) participates in ATP binding.

This sequence belongs to the LpxK family.

It carries out the reaction a lipid A disaccharide + ATP = a lipid IVA + ADP + H(+). Its pathway is glycolipid biosynthesis; lipid IV(A) biosynthesis; lipid IV(A) from (3R)-3-hydroxytetradecanoyl-[acyl-carrier-protein] and UDP-N-acetyl-alpha-D-glucosamine: step 6/6. Its function is as follows. Transfers the gamma-phosphate of ATP to the 4'-position of a tetraacyldisaccharide 1-phosphate intermediate (termed DS-1-P) to form tetraacyldisaccharide 1,4'-bis-phosphate (lipid IVA). This is Tetraacyldisaccharide 4'-kinase from Stutzerimonas stutzeri (strain A1501) (Pseudomonas stutzeri).